A 209-amino-acid chain; its full sequence is Imidazole glycerol phosphate synthase subunit HisH (209 aa).

In terms of domain architecture, Glutamine amidotransferase type-1 spans 1-205 (MIAIIDYGMG…KGVVETWKSS (205 aa)). Cysteine 79 acts as the Nucleophile in catalysis. Catalysis depends on residues histidine 180 and glutamate 182.

As to quaternary structure, heterodimer of HisH and HisF.

It localises to the cytoplasm. It carries out the reaction 5-[(5-phospho-1-deoxy-D-ribulos-1-ylimino)methylamino]-1-(5-phospho-beta-D-ribosyl)imidazole-4-carboxamide + L-glutamine = D-erythro-1-(imidazol-4-yl)glycerol 3-phosphate + 5-amino-1-(5-phospho-beta-D-ribosyl)imidazole-4-carboxamide + L-glutamate + H(+). It catalyses the reaction L-glutamine + H2O = L-glutamate + NH4(+). The protein operates within amino-acid biosynthesis; L-histidine biosynthesis; L-histidine from 5-phospho-alpha-D-ribose 1-diphosphate: step 5/9. Functionally, IGPS catalyzes the conversion of PRFAR and glutamine to IGP, AICAR and glutamate. The HisH subunit catalyzes the hydrolysis of glutamine to glutamate and ammonia as part of the synthesis of IGP and AICAR. The resulting ammonia molecule is channeled to the active site of HisF. The protein is Imidazole glycerol phosphate synthase subunit HisH of Bacillus thuringiensis (strain Al Hakam).